The following is a 407-amino-acid chain: Phosphopentomutase (407 aa).

Residues Asp10, Asp306, His311, Asp347, His348, and His359 each coordinate Mn(2+).

It belongs to the phosphopentomutase family. Requires Mn(2+) as cofactor.

The protein resides in the cytoplasm. It carries out the reaction 2-deoxy-alpha-D-ribose 1-phosphate = 2-deoxy-D-ribose 5-phosphate. It catalyses the reaction alpha-D-ribose 1-phosphate = D-ribose 5-phosphate. The protein operates within carbohydrate degradation; 2-deoxy-D-ribose 1-phosphate degradation; D-glyceraldehyde 3-phosphate and acetaldehyde from 2-deoxy-alpha-D-ribose 1-phosphate: step 1/2. Its function is as follows. Isomerase that catalyzes the conversion of deoxy-ribose 1-phosphate (dRib-1-P) and ribose 1-phosphate (Rib-1-P) to deoxy-ribose 5-phosphate (dRib-5-P) and ribose 5-phosphate (Rib-5-P), respectively. The sequence is that of Phosphopentomutase from Escherichia coli O127:H6 (strain E2348/69 / EPEC).